Here is a 165-residue protein sequence, read N- to C-terminus: MANEKTQSDLNEKLIAVNRVSKTVKGGRIFSFTALTVVGDGNGRIGFGYGKAREVPAAIQKSMEKARRNMVTVALNEGTLHHAVKGRHTGSKVYMQPASEGTGIIAGGAMRAVLEVAGIRNVLAKAYGSTNPINVVRATIAGLSGMNSPEMIAAKRGLSVKEILG.

The 64-residue stretch at 10-73 folds into the S5 DRBM domain; that stretch reads LNEKLIAVNR…EKARRNMVTV (64 aa).

Belongs to the universal ribosomal protein uS5 family. Part of the 30S ribosomal subunit. Contacts proteins S4 and S8.

Its function is as follows. With S4 and S12 plays an important role in translational accuracy. In terms of biological role, located at the back of the 30S subunit body where it stabilizes the conformation of the head with respect to the body. The protein is Small ribosomal subunit protein uS5 of Photobacterium profundum (strain SS9).